The chain runs to 314 residues: Ribosomal RNA small subunit methyltransferase H (314 aa).

Residues 37 to 39, Asp-57, Phe-84, Asp-105, and Gln-112 each bind S-adenosyl-L-methionine; that span reads GSH.

This sequence belongs to the methyltransferase superfamily. RsmH family.

Its subcellular location is the cytoplasm. It catalyses the reaction cytidine(1402) in 16S rRNA + S-adenosyl-L-methionine = N(4)-methylcytidine(1402) in 16S rRNA + S-adenosyl-L-homocysteine + H(+). Specifically methylates the N4 position of cytidine in position 1402 (C1402) of 16S rRNA. The protein is Ribosomal RNA small subunit methyltransferase H of Fusobacterium nucleatum subsp. nucleatum (strain ATCC 25586 / DSM 15643 / BCRC 10681 / CIP 101130 / JCM 8532 / KCTC 2640 / LMG 13131 / VPI 4355).